Consider the following 591-residue polypeptide: Aspartate--tRNA(Asp/Asn) ligase (591 aa).

Glu175 is a binding site for L-aspartate. Residues 199-202 (QQFK) form an aspartate region. Residues Arg221 and His453 each contribute to the L-aspartate site. Position 221-223 (221-223 (RDE)) interacts with ATP. Glu486 contacts ATP. Arg493 lines the L-aspartate pocket. 538-541 (GIDR) contacts ATP.

Belongs to the class-II aminoacyl-tRNA synthetase family. Type 1 subfamily. As to quaternary structure, homodimer.

It localises to the cytoplasm. The catalysed reaction is tRNA(Asx) + L-aspartate + ATP = L-aspartyl-tRNA(Asx) + AMP + diphosphate. In terms of biological role, aspartyl-tRNA synthetase with relaxed tRNA specificity since it is able to aspartylate not only its cognate tRNA(Asp) but also tRNA(Asn). Reaction proceeds in two steps: L-aspartate is first activated by ATP to form Asp-AMP and then transferred to the acceptor end of tRNA(Asp/Asn). The chain is Aspartate--tRNA(Asp/Asn) ligase from Paracoccus denitrificans (strain Pd 1222).